The chain runs to 154 residues: PTS system fructose-specific EIIA component (154 aa).

In terms of domain architecture, PTS EIIA type-2 spans 8–152 (TITPLELISL…QTVQDVLAEV (145 aa)). His70 functions as the Tele-phosphohistidine intermediate in the catalytic mechanism. At His70 the chain carries Phosphohistidine; by HPr.

Its subcellular location is the cytoplasm. The phosphoenolpyruvate-dependent sugar phosphotransferase system (sugar PTS), a major carbohydrate active transport system, catalyzes the phosphorylation of incoming sugar substrates concomitantly with their translocation across the cell membrane. The enzyme II PtfABC PTS system is involved in fructose transport. The sequence is that of PTS system fructose-specific EIIA component from Haloferax volcanii (strain ATCC 29605 / DSM 3757 / JCM 8879 / NBRC 14742 / NCIMB 2012 / VKM B-1768 / DS2) (Halobacterium volcanii).